The sequence spans 414 residues: Dual-specificity RNA methyltransferase RlmN (414 aa).

Residues 1–20 (MMSTPETATEATAPEAAPAP) are compositionally biased toward low complexity. Positions 1-24 (MMSTPETATEATAPEAAPAPSLGA) are disordered. Catalysis depends on glutamate 129, which acts as the Proton acceptor. Positions 135–385 (ESDRGTLCVS…VRTPRGRDIL (251 aa)) constitute a Radical SAM core domain. Residues cysteine 142 and cysteine 388 are joined by a disulfide bond. [4Fe-4S] cluster is bound by residues cysteine 149, cysteine 153, and cysteine 156. S-adenosyl-L-methionine is bound by residues 214 to 215 (GE), serine 246, 268 to 270 (SLH), and asparagine 345. Cysteine 388 serves as the catalytic S-methylcysteine intermediate.

It belongs to the radical SAM superfamily. RlmN family. Requires [4Fe-4S] cluster as cofactor.

It is found in the cytoplasm. The enzyme catalyses adenosine(2503) in 23S rRNA + 2 reduced [2Fe-2S]-[ferredoxin] + 2 S-adenosyl-L-methionine = 2-methyladenosine(2503) in 23S rRNA + 5'-deoxyadenosine + L-methionine + 2 oxidized [2Fe-2S]-[ferredoxin] + S-adenosyl-L-homocysteine. The catalysed reaction is adenosine(37) in tRNA + 2 reduced [2Fe-2S]-[ferredoxin] + 2 S-adenosyl-L-methionine = 2-methyladenosine(37) in tRNA + 5'-deoxyadenosine + L-methionine + 2 oxidized [2Fe-2S]-[ferredoxin] + S-adenosyl-L-homocysteine. Specifically methylates position 2 of adenine 2503 in 23S rRNA and position 2 of adenine 37 in tRNAs. m2A2503 modification seems to play a crucial role in the proofreading step occurring at the peptidyl transferase center and thus would serve to optimize ribosomal fidelity. The protein is Dual-specificity RNA methyltransferase RlmN of Xanthobacter autotrophicus (strain ATCC BAA-1158 / Py2).